Consider the following 419-residue polypeptide: UDP-N-acetylglucosamine 1-carboxyvinyltransferase (419 aa).

A phosphoenolpyruvate-binding site is contributed by 22–23 (KN). Arginine 92 contributes to the UDP-N-acetyl-alpha-D-glucosamine binding site. The Proton donor role is filled by cysteine 116. Cysteine 116 carries the post-translational modification 2-(S-cysteinyl)pyruvic acid O-phosphothioketal. Residues 121–125 (RPIDQ), aspartate 305, and isoleucine 327 contribute to the UDP-N-acetyl-alpha-D-glucosamine site.

The protein belongs to the EPSP synthase family. MurA subfamily.

It is found in the cytoplasm. The enzyme catalyses phosphoenolpyruvate + UDP-N-acetyl-alpha-D-glucosamine = UDP-N-acetyl-3-O-(1-carboxyvinyl)-alpha-D-glucosamine + phosphate. It participates in cell wall biogenesis; peptidoglycan biosynthesis. Functionally, cell wall formation. Adds enolpyruvyl to UDP-N-acetylglucosamine. The sequence is that of UDP-N-acetylglucosamine 1-carboxyvinyltransferase from Trichlorobacter lovleyi (strain ATCC BAA-1151 / DSM 17278 / SZ) (Geobacter lovleyi).